A 168-amino-acid polypeptide reads, in one-letter code: Large ribosomal subunit protein uL10 (168 aa).

The protein belongs to the universal ribosomal protein uL10 family. In terms of assembly, part of the ribosomal stalk of the 50S ribosomal subunit. The N-terminus interacts with L11 and the large rRNA to form the base of the stalk. The C-terminus forms an elongated spine to which L12 dimers bind in a sequential fashion forming a multimeric L10(L12)X complex.

In terms of biological role, forms part of the ribosomal stalk, playing a central role in the interaction of the ribosome with GTP-bound translation factors. The chain is Large ribosomal subunit protein uL10 from Ralstonia nicotianae (strain ATCC BAA-1114 / GMI1000) (Ralstonia solanacearum).